A 341-amino-acid chain; its full sequence is HTH-type transcriptional repressor PurR (341 aa).

The 55-residue stretch at 2–56 folds into the HTH lacI-type domain; sequence ATIKDVAKRANVSTTTVSHVINKTRFVSEETRNAVWAAIKELHYSPSAVARSLKV. Residues 4-23 constitute a DNA-binding region (H-T-H motif); that stretch reads IKDVAKRANVSTTTVSHVIN. The DNA-binding element occupies 48–56; it reads SAVARSLKV. Residues Tyr73, Arg190, Thr192, Phe221, and Asp275 each coordinate hypoxanthine.

Homodimer.

The protein operates within purine metabolism; purine nucleotide biosynthesis [regulation]. Functionally, is the main repressor of the genes involved in the de novo synthesis of purine nucleotides, regulating purB, purC, purEK, purF, purHD, purL, purMN and guaBA expression. PurR is allosterically activated to bind its cognate DNA by binding the purine corepressors, hypoxanthine or guanine, thereby effecting transcription repression. This chain is HTH-type transcriptional repressor PurR, found in Escherichia coli O139:H28 (strain E24377A / ETEC).